Consider the following 75-residue polypeptide: UPF0352 protein ETA_12580 (75 aa).

This sequence belongs to the UPF0352 family.

The protein is UPF0352 protein ETA_12580 of Erwinia tasmaniensis (strain DSM 17950 / CFBP 7177 / CIP 109463 / NCPPB 4357 / Et1/99).